The following is a 291-amino-acid chain: MKTFPILALLAIVATTATTAVRVPVPQLQLQNPSQQQPQEQVPLVQEQQFQGQQQPFPPQQPYPQPQPFPSQQPYLQLQPFPQPQLPYPQPQPFRPQQPYPQPQPQYSQPQQPISQQQQQQQQQQQQQQQILQQILQQQLIPCRDVVLQQHNIAHGSSQVLQESTYQLVQQLCCQQLWQIPEQSRCQAIHNVVHAIILHQQHHHHQQQQQQQQQQPLSQVSFQQPQQQYPSGQGFFQPSQQNPQAQGSFQPQQLPQFEEIRNLALQTLPAMCNVYIPPYCTIAPFGIFGTN.

Positions Met1–Ala20 are cleaved as a signal peptide. Over residues Asn32–Gln55 the composition is skewed to low complexity. 2 disordered regions span residues Asn32–Gln120 and Gln227–Gln250. Composition is skewed to pro residues over residues Pro56–Ser71 and Phe81–Gln104. Composition is skewed to low complexity over residues Pro105–Gln120 and Gln227–Gln237. Residues Pro238 to Gln250 are compositionally biased toward polar residues.

Belongs to the gliadin/glutenin family. In terms of processing, substrate of transglutaminase.

Functionally, gliadin is the major seed storage protein in wheat. In Triticum aestivum (Wheat), this protein is Alpha/beta-gliadin A-II.